The primary structure comprises 884 residues: Lon protease homolog 2, peroxisomal (884 aa).

Positions 12 to 255 (LAILPFRNKV…KATELVDRHL (244 aa)) constitute a Lon N-terminal domain. A disordered region spans residues 67 to 101 (SLLSPGVGSDSGEGGSKAPGGSAGESTKQDTKNGK). The span at 75–89 (SDSGEGGSKAPGGSA) shows a compositional bias: gly residues. 408 to 415 (GPPGVGKT) lines the ATP pocket. Residues 689–874 (VASPGVSVGL…EEVLDHAFEG (186 aa)) form the Lon proteolytic domain. Catalysis depends on residues Ser-780 and Lys-823. The Microbody targeting signal motif lies at 882–884 (SKL).

The protein belongs to the peptidase S16 family. Expressed in roots, leaves and panicles.

It is found in the peroxisome matrix. It carries out the reaction Hydrolysis of proteins in presence of ATP.. In terms of biological role, ATP-dependent serine protease that mediates the selective degradation of misfolded and unassembled polypeptides in the peroxisomal matrix. Necessary for type 2 peroxisome targeting signal (PTS2)-containing protein processing and facilitates peroxisome matrix protein import. The protein is Lon protease homolog 2, peroxisomal (LON1) of Oryza sativa subsp. indica (Rice).